Here is a 634-residue protein sequence, read N- to C-terminus: ABC transporter B family member 29, chloroplastic (634 aa).

A chloroplast-targeting transit peptide spans 1 to 51 (MSFLLLTPPPCLLIPPPPLSHRRSSSLFLKHPFQPSPRPLSFCKPSALRLR). A run of 6 helical transmembrane segments spans residues 75 to 95 (TVLL…QIVP), 119 to 139 (LVLA…QAFL), 195 to 215 (LLNT…HMIV), 219 to 239 (ALTL…AYLG), 307 to 327 (IVQV…VILA), and 330 to 350 (SLSS…IDPV). In terms of domain architecture, ABC transmembrane type-1 spans 77–362 (LLGWLCSCVS…LGKAYNELKQ (286 aa)). Residues 396 to 633 (VELCDISFKY…KDSLTSAGLV (238 aa)) form the ABC transporter domain. Position 430 to 437 (430 to 437 (GPSGGGKT)) interacts with ATP.

The protein belongs to the ABC transporter superfamily. ABCB family. Multidrug resistance exporter (TC 3.A.1.201) subfamily.

It is found in the plastid. It localises to the chloroplast membrane. This is ABC transporter B family member 29, chloroplastic (ABCB29) from Arabidopsis thaliana (Mouse-ear cress).